Reading from the N-terminus, the 750-residue chain is Photosystem I P700 chlorophyll a apoprotein A1 (750 aa).

8 helical membrane passes run Val-70–Ala-93, Leu-156–His-179, Leu-195–Leu-219, Thr-291–Tyr-309, Trp-346–Tyr-369, Leu-385–Val-411, Ala-433–His-455, and Phe-531–Leu-549. Positions 573 and 582 each coordinate [4Fe-4S] cluster. 2 consecutive transmembrane segments (helical) span residues His-589–Trp-610 and Leu-664–Phe-686. A chlorophyll a'-binding site is contributed by His-675. Chlorophyll a is bound by residues Met-683 and Tyr-691. Trp-692 is a phylloquinone binding site. A helical membrane pass occupies residues Ala-724–Ala-744.

This sequence belongs to the PsaA/PsaB family. The PsaA/B heterodimer binds the P700 chlorophyll special pair and subsequent electron acceptors. PSI consists of a core antenna complex that captures photons, and an electron transfer chain that converts photonic excitation into a charge separation. The eukaryotic PSI reaction center is composed of at least 11 subunits. P700 is a chlorophyll a/chlorophyll a' dimer, A0 is one or more chlorophyll a, A1 is one or both phylloquinones and FX is a shared 4Fe-4S iron-sulfur center. is required as a cofactor.

The protein resides in the plastid. It is found in the chloroplast thylakoid membrane. It catalyses the reaction reduced [plastocyanin] + hnu + oxidized [2Fe-2S]-[ferredoxin] = oxidized [plastocyanin] + reduced [2Fe-2S]-[ferredoxin]. In terms of biological role, psaA and PsaB bind P700, the primary electron donor of photosystem I (PSI), as well as the electron acceptors A0, A1 and FX. PSI is a plastocyanin-ferredoxin oxidoreductase, converting photonic excitation into a charge separation, which transfers an electron from the donor P700 chlorophyll pair to the spectroscopically characterized acceptors A0, A1, FX, FA and FB in turn. Oxidized P700 is reduced on the lumenal side of the thylakoid membrane by plastocyanin. The polypeptide is Photosystem I P700 chlorophyll a apoprotein A1 (Psilotum nudum (Whisk fern)).